The sequence spans 207 residues: Ribonuclease HII (207 aa).

One can recognise an RNase H type-2 domain in the interval 5–207; it reads PLIIGVDEAG…APVRALLRPC (203 aa). A divalent metal cation is bound by residues Asp-11, Glu-12, and Asp-117.

Belongs to the RNase HII family. It depends on Mn(2+) as a cofactor. Mg(2+) serves as cofactor.

It localises to the cytoplasm. It carries out the reaction Endonucleolytic cleavage to 5'-phosphomonoester.. Endonuclease that specifically degrades the RNA of RNA-DNA hybrids. In Hyphomonas neptunium (strain ATCC 15444), this protein is Ribonuclease HII.